Reading from the N-terminus, the 179-residue chain is Large ribosomal subunit protein uL5 (179 aa).

Belongs to the universal ribosomal protein uL5 family. As to quaternary structure, part of the 50S ribosomal subunit; part of the 5S rRNA/L5/L18/L25 subcomplex. Contacts the 5S rRNA and the P site tRNA. Forms a bridge to the 30S subunit in the 70S ribosome.

Its function is as follows. This is one of the proteins that bind and probably mediate the attachment of the 5S RNA into the large ribosomal subunit, where it forms part of the central protuberance. In the 70S ribosome it contacts protein S13 of the 30S subunit (bridge B1b), connecting the 2 subunits; this bridge is implicated in subunit movement. Contacts the P site tRNA; the 5S rRNA and some of its associated proteins might help stabilize positioning of ribosome-bound tRNAs. The sequence is that of Large ribosomal subunit protein uL5 from Caldanaerobacter subterraneus subsp. tengcongensis (strain DSM 15242 / JCM 11007 / NBRC 100824 / MB4) (Thermoanaerobacter tengcongensis).